We begin with the raw amino-acid sequence, 352 residues long: MEAMGEWSNNLGGMYTYATEEADFMNQLLASYDHPGTGSSSGAAASGDHQGLYWNLGSHHNHLSLVSEAGSFCFSQESSSYSAGNSGYYTVVPPTVEENQNETMDFGMEDVTINTNSYLVGEETSECDVEKYSSGKTLMPLETVVENHDDEESLLQSEISVTTTKSLTGSKKRSRATSTDKNKRARVNKRAQKNVEMSGDNNEGEEEEGETKLKKRKNGAMMSRQNSSTTFCTEEESNCADQDGGGEDSSSKEDDPSKALNLNGKTRASRGAATDPQSLYARKRRERINERLRILQNLVPNGTKVDISTMLEEAVHYVKFLQLQIKLLSSDDLWMYAPIAFNGMDIGLSSPR.

Positions 160-169 (SVTTTKSLTG) are enriched in polar residues. Positions 160–277 (SVTTTKSLTG…ASRGAATDPQ (118 aa)) are disordered. Over residues 183 to 192 (KRARVNKRAQ) the composition is skewed to basic residues. Positions 223-232 (SRQNSSTTFC) are enriched in polar residues. A basic motif region spans residues 272 to 285 (AATDPQSLYARKRR). One can recognise a bHLH domain in the interval 272–321 (AATDPQSLYARKRRERINERLRILQNLVPNGTKVDISTMLEEAVHYVKFL). Residues 286-321 (ERINERLRILQNLVPNGTKVDISTMLEEAVHYVKFL) form a helix-loop-helix motif region.

As to quaternary structure, homodimer. In terms of tissue distribution, expressed in roots. Expressed in root epidermal hair cells.

The protein localises to the nucleus. Transcription factor involved in the regulation of root hair elongation. Does not seem to be a direct transcriptional target of RHD6 and RSL1. Involved in the regulation of root hair elongation in response to low phosphate. This is Transcription factor RSL2 from Arabidopsis thaliana (Mouse-ear cress).